Here is a 209-residue protein sequence, read N- to C-terminus: MSSSLPLRDDGALRGSLMLAVFTLFGLGLAYSLVATGITGALFSEQATGSLVRVDARVVGSALVAQPFTDARYFQPRPSAAKYDLTAASGSNQARSNPDLLARIAATRAQVAKRDGIAPEAVPGELLTQSGSGLDPHLSPAGAQVQIRRVAAARGLPEQRVAALVQAATEAPQFGLLGQPRVNVLALNLALDKAGNGESGRDNGVKQAY.

Residues 18–38 (MLAVFTLFGLGLAYSLVATGI) form a helical membrane-spanning segment.

The protein belongs to the KdpC family. In terms of assembly, the system is composed of three essential subunits: KdpA, KdpB and KdpC.

It localises to the cell inner membrane. Part of the high-affinity ATP-driven potassium transport (or Kdp) system, which catalyzes the hydrolysis of ATP coupled with the electrogenic transport of potassium into the cytoplasm. This subunit acts as a catalytic chaperone that increases the ATP-binding affinity of the ATP-hydrolyzing subunit KdpB by the formation of a transient KdpB/KdpC/ATP ternary complex. The protein is Potassium-transporting ATPase KdpC subunit of Xanthomonas oryzae pv. oryzae (strain MAFF 311018).